The following is a 356-amino-acid chain: Septin-12 (356 aa).

Residues 1 to 23 form a disordered region; the sequence is MDERRTPSPCSSRPSSPRTPPCE. Over residues 7–16 the composition is skewed to low complexity; that stretch reads PSPCSSRPSS. In terms of domain architecture, Septin-type G spans 44 to 315; the sequence is TGFEFNIMVV…ENYRVLRLNE (272 aa). The interval 44–317 is interaction with SEPTIN7; it reads TGFEFNIMVV…YRVLRLNESH (274 aa). The G1 motif stretch occupies residues 54-61; the sequence is GQSGLGKS. GTP-binding positions include 54–61, T87, G113, 193–201, G249, and R264; these read GQSGLGKS and RADSLTIEE. The segment at 110 to 113 is G3 motif; that stretch reads DTPG. Residues 192–195 form a G4 motif region; sequence ARAD. The tract at residues 256–356 is self-association (via N-terminus) to polymerize octameric septin 12-7-6-2/4-2/4-6-7-12 filaments; that stretch reads VNGRCVLGRK…RSKDPRDDEC (101 aa). Residues 330 to 356 are disordered; that stretch reads PASPGQLMAPGPEKVRKRSKDPRDDEC.

It belongs to the TRAFAC class TrmE-Era-EngA-EngB-Septin-like GTPase superfamily. Septin GTPase family. In terms of assembly, septins polymerize into heterooligomeric protein complexes that form filaments, and can associate with cellular membranes, actin filaments and microtubules. GTPase activity is required for filament formation. Interacts with SEPTIN6 and SEPTIN11. Self-associates. Component of a octameric complex consisting of SEPTIN12, SEPTIN7, SEPTIN6 and SEPTIN2 or SEPTIN4 in the order 12-7-6-2-2-6-7-12 or 12-7-6-4-4-6-7-12 and located in the sperm annulus; the octamer polymerizes into filaments via the SEPTIN12 N- and C-termini; the SEPTIN12:SEPTIN7 association is mediated by the GTP-binding domains. Interacts with SPAG4 and LMNB1. Associates with alpha- and beta-tubulins. In terms of tissue distribution, predominantly expressed in testis and epididymis. Component of the sperm tail annulus (at protein level).

It is found in the cytoplasm. Its subcellular location is the cytoskeleton. The protein localises to the spindle. It localises to the cell projection. The protein resides in the cilium. It is found in the flagellum. Filament-forming cytoskeletal GTPase. May play a role in cytokinesis (Potential). Involved in spermatogenesis. Involved in the morphogenesis of sperm heads and the elongation of sperm tails probably implicating the association with alpha- and beta-tubulins. Forms a filamentous structure with SEPTIN7, SEPTIN6, SEPTIN2 and probably SEPTIN4 at the sperm annulus which is required for the structural integrity and motility of the sperm tail during postmeiotic differentiation. This is Septin-12 from Rattus norvegicus (Rat).